We begin with the raw amino-acid sequence, 108 residues long: Glutaredoxin-C10 (108 aa).

The Glutaredoxin domain maps to 1–107 (MERVAKLASE…PMLKNAGALW (107 aa)). Residues Cys21 and Cys24 are joined by a disulfide bond. A Responsive for interaction with TGA factors motif is present at residues 105-108 (ALWL).

The protein belongs to the glutaredoxin family. CC-type subfamily.

The protein resides in the cytoplasm. It localises to the nucleus. Has a glutathione-disulfide oxidoreductase activity in the presence of NADPH and glutathione reductase. Reduces low molecular weight disulfides and proteins. This Oryza sativa subsp. japonica (Rice) protein is Glutaredoxin-C10 (GRXC10).